The primary structure comprises 115 residues: MPKANNAVASRARRKRILKKAKGFWGARGNVLTVVKHSVDKAEQYAYRDRRAKKRTFRSLWIMRINAAARLNGTTYSQLINGMAKNNIQIDRKALAEIAVKDAAAFSAIVQAANK.

It belongs to the bacterial ribosomal protein bL20 family.

In terms of biological role, binds directly to 23S ribosomal RNA and is necessary for the in vitro assembly process of the 50S ribosomal subunit. It is not involved in the protein synthesizing functions of that subunit. In Chlorobium chlorochromatii (strain CaD3), this protein is Large ribosomal subunit protein bL20.